The following is a 276-amino-acid chain: Thymidylate synthase (276 aa).

Position 26 (Arg26) interacts with dUMP. Position 56 (His56) interacts with (6R)-5,10-methylene-5,6,7,8-tetrahydrofolate. Arg131–Arg132 lines the dUMP pocket. The Nucleophile role is filled by Cys151. DUMP contacts are provided by residues Arg178–Asp181, Asn189, and His219–Tyr221. Asp181 lines the (6R)-5,10-methylene-5,6,7,8-tetrahydrofolate pocket. Residue Ala275 participates in (6R)-5,10-methylene-5,6,7,8-tetrahydrofolate binding.

The protein belongs to the thymidylate synthase family. Bacterial-type ThyA subfamily. Homodimer.

Its subcellular location is the cytoplasm. The catalysed reaction is dUMP + (6R)-5,10-methylene-5,6,7,8-tetrahydrofolate = 7,8-dihydrofolate + dTMP. It functions in the pathway pyrimidine metabolism; dTTP biosynthesis. In terms of biological role, catalyzes the reductive methylation of 2'-deoxyuridine-5'-monophosphate (dUMP) to 2'-deoxythymidine-5'-monophosphate (dTMP) while utilizing 5,10-methylenetetrahydrofolate (mTHF) as the methyl donor and reductant in the reaction, yielding dihydrofolate (DHF) as a by-product. This enzymatic reaction provides an intracellular de novo source of dTMP, an essential precursor for DNA biosynthesis. This chain is Thymidylate synthase, found in Polaromonas naphthalenivorans (strain CJ2).